Consider the following 193-residue polypeptide: Potassium-transporting ATPase KdpC subunit (193 aa).

The chain crosses the membrane as a helical span at residues 14–34 (ITFTFLVLCGLVYPLIVTGIA).

It belongs to the KdpC family. As to quaternary structure, the system is composed of three essential subunits: KdpA, KdpB and KdpC.

It localises to the cell membrane. Functionally, part of the high-affinity ATP-driven potassium transport (or Kdp) system, which catalyzes the hydrolysis of ATP coupled with the electrogenic transport of potassium into the cytoplasm. This subunit acts as a catalytic chaperone that increases the ATP-binding affinity of the ATP-hydrolyzing subunit KdpB by the formation of a transient KdpB/KdpC/ATP ternary complex. The chain is Potassium-transporting ATPase KdpC subunit from Bacillus cereus (strain AH820).